We begin with the raw amino-acid sequence, 417 residues long: Lipoyl synthase, mitochondrial (417 aa).

The tract at residues 35–56 (EANPTDLAGLKRKAKRRPTKLA) is disordered. The segment covering 44–53 (LKRKAKRRPT) has biased composition (basic residues). Cys-122, Cys-127, Cys-133, Cys-152, Cys-156, Cys-159, and Ser-367 together coordinate [4Fe-4S] cluster. The 220-residue stretch at 137–356 (KKSEATATIM…RDKALEMGFL (220 aa)) folds into the Radical SAM core domain. Positions 389–417 (IEEQQHDKENNNLLLSKEDEKTTQEKANF) are disordered. Basic and acidic residues predominate over residues 391-417 (EQQHDKENNNLLLSKEDEKTTQEKANF).

The protein belongs to the radical SAM superfamily. Lipoyl synthase family. [4Fe-4S] cluster serves as cofactor.

It is found in the mitochondrion. It carries out the reaction [[Fe-S] cluster scaffold protein carrying a second [4Fe-4S](2+) cluster] + N(6)-octanoyl-L-lysyl-[protein] + 2 oxidized [2Fe-2S]-[ferredoxin] + 2 S-adenosyl-L-methionine + 4 H(+) = [[Fe-S] cluster scaffold protein] + N(6)-[(R)-dihydrolipoyl]-L-lysyl-[protein] + 4 Fe(3+) + 2 hydrogen sulfide + 2 5'-deoxyadenosine + 2 L-methionine + 2 reduced [2Fe-2S]-[ferredoxin]. The protein operates within protein modification; protein lipoylation via endogenous pathway; protein N(6)-(lipoyl)lysine from octanoyl-[acyl-carrier-protein]: step 2/2. Its function is as follows. Catalyzes the radical-mediated insertion of two sulfur atoms into the C-6 and C-8 positions of the octanoyl moiety bound to the lipoyl domains of lipoate-dependent enzymes, thereby converting the octanoylated domains into lipoylated derivatives. The protein is Lipoyl synthase, mitochondrial of Komagataella phaffii (strain GS115 / ATCC 20864) (Yeast).